The primary structure comprises 322 residues: Olfactory receptor 11L1 (322 aa).

At 1–25 (MEPQNTSTVTNFQLLGFQNLLEWQA) the chain is on the extracellular side. Asparagine 5 is a glycosylation site (N-linked (GlcNAc...) asparagine). Residues 26 to 46 (LLFVIFLLIYCLTIIGNVVII) form a helical membrane-spanning segment. The Cytoplasmic segment spans residues 47–54 (TVVSQGLR). Residues 55 to 75 (LHSPMYMFLQHLSFLEVWYTS) traverse the membrane as a helical segment. Topologically, residues 76–99 (TTVPLLLANLLSWGQAISFSACMA) are extracellular. Cysteine 97 and cysteine 189 are disulfide-bonded. Residues 100-120 (QLYFFVFLGATECFLLAFMAY) form a helical membrane-spanning segment. The Cytoplasmic segment spans residues 121–139 (DRYLAICSPLRYPFLMHRG). A helical transmembrane segment spans residues 140–160 (LCARLVVVSWCTGVSTGFLPS). Topologically, residues 161–197 (LMISRLDFCGRNQINHFFCDLPPLMQLSCSRVYITEV) are extracellular. A helical transmembrane segment spans residues 198-217 (TIFILSIAVLCICFFLTLGP). The Cytoplasmic portion of the chain corresponds to 218-237 (YVFIVSSILRIPSTSGRRKT). Residues 238–258 (FSTCGSHLAVVTLYYGTMISM) traverse the membrane as a helical segment. At 259-271 (YVCPSPHLLPEIN) the chain is on the extracellular side. The chain crosses the membrane as a helical span at residues 272–292 (KIISVFYTVVTPLLNPVIYSL). Over 293-322 (RNKDFKEAVRKVMRRKCGILWSTSKRKFLY) the chain is Cytoplasmic.

This sequence belongs to the G-protein coupled receptor 1 family.

Its subcellular location is the cell membrane. In terms of biological role, odorant receptor. This Homo sapiens (Human) protein is Olfactory receptor 11L1 (OR11L1).